Here is a 247-residue protein sequence, read N- to C-terminus: Cell division protein ZapD (247 aa).

It belongs to the ZapD family. In terms of assembly, interacts with FtsZ.

The protein localises to the cytoplasm. Its function is as follows. Cell division factor that enhances FtsZ-ring assembly. Directly interacts with FtsZ and promotes bundling of FtsZ protofilaments, with a reduction in FtsZ GTPase activity. This Escherichia coli O139:H28 (strain E24377A / ETEC) protein is Cell division protein ZapD.